Consider the following 858-residue polypeptide: Neurofilament medium polypeptide (858 aa).

Position 2 is an N-acetylserine (S2). The interval 2 to 99 (SYTMEPLGNP…KLSRSNEKEQ (98 aa)) is head. The interval 22 to 57 (ATYSRASASPSSGFRSQSWSRGSGSTVSSSYKRTNL) is disordered. The segment covering 30–54 (SPSSGFRSQSWSRGSGSTVSSSYKR) has biased composition (low complexity). The O-linked (GlcNAc) threonine glycan is linked to T47. The 312-residue stretch at 96 to 407 (EKEQLQGLND…KLLEGEETRF (312 aa)) folds into the IF rod domain. The segment at 100–131 (LQGLNDRFAGYIEKVHYLEQQNKEIEAELAAL) is coil 1A. The linker 1 stretch occupies residues 132–144 (RQKHAGRAQLGDA). The tract at residues 145–243 (YEQELRELRG…EEEVAELLAQ (99 aa)) is coil 1B. The interval 244-260 (LQASHATVERKDYLKTD) is linker 12. The coil 2A stretch occupies residues 261–282 (LTTALKEIRAQLECQSDHNMHQ). Residues 283 to 286 (AEEW) are linker 2. Positions 287–407 (FKCRYAKLTE…KLLEGEETRF (121 aa)) are coil 2B. A tail region spans residues 408-858 (SAFSGSITGP…SHAVVKEIKE (451 aa)). The O-linked (GlcNAc) threonine glycan is linked to T427. The tract at residues 478–788 (AAKAQEEEQE…VVTNGLDVSP (311 aa)) is disordered. Acidic residues-rich tracts occupy residues 484–500 (EEQEEEKAEEEAVEEEA) and 509–524 (AAEEEEKEEEEAEEEE). A compositionally biased stretch (basic and acidic residues) spans 525–541 (AAKSDAAEEGGSKKEEI). Residues 542-555 (EEKEEGEEAEEEEA) show a composition bias toward acidic residues. The span at 556–572 (EAKGKAEEAGAKVEKVK) shows a compositional bias: basic and acidic residues. Residues 576–586 (AKSPPKSPPKS) are compositionally biased toward pro residues. A compositionally biased stretch (low complexity) spans 590-601 (EQAKAVQKAAAE). Residues 602 to 623 (VGKDQKAEKAAEKAAKEEKAAS) show a composition bias toward basic and acidic residues. Over residues 624-637 (PEKPATPKVTSPEK) the composition is skewed to low complexity. 2 stretches are compositionally biased toward basic and acidic residues: residues 651–664 (ITPEKVRSPEKPTT) and 675–727 (ASPE…KAVV). The span at 728-743 (EESITVTKVTKVTAEV) shows a compositional bias: low complexity. Over residues 744–771 (EVSKEARKEDIAVNGEVEEKKDEAKEKE) the composition is skewed to basic and acidic residues.

Belongs to the intermediate filament family. Post-translationally, there are a number of repeats of the tripeptide K-S-P, NFM is phosphorylated on a number of the serines in this motif. It is thought that phosphorylation of NFM results in the formation of interfilament cross bridges that are important in the maintenance of axonal caliber. Phosphorylation seems to play a major role in the functioning of the larger neurofilament polypeptides (NF-M and NF-H), the levels of phosphorylation being altered developmentally and coincident with a change in the neurofilament function.

It is found in the cytoplasm. Its subcellular location is the cytoskeleton. The protein localises to the cell projection. The protein resides in the axon. Neurofilaments usually contain three intermediate filament proteins: NEFL, NEFM, and NEFH which are involved in the maintenance of neuronal caliber. May additionally cooperate with other neuronal intermediate filament proteins to form neuronal filamentous networks. This Gallus gallus (Chicken) protein is Neurofilament medium polypeptide (NEFM).